A 132-amino-acid chain; its full sequence is Chemokine-like protein TAFA-5 (132 aa).

A signal peptide spans 1–43; it reads MAPSPRTGSRQDATALPSMSSTFWAFMILASLLIAYCSQLAAG. N113 carries N-linked (GlcNAc...) asparagine glycosylation.

The protein belongs to the TAFA family. In terms of tissue distribution, expressed in the subcutaneous and perirenal adipose tissue (at protein level). Highly expressed in adipose tissue with moderate expression in the brain and ovary. Isoform 2: Brain-specific.

The protein resides in the secreted. Acts as a chemokine-like protein by regulating cell proliferation and migration through activation of G protein-coupled receptors (GPCRs), such as S1PR2 and FPR2. Stimulates chemotactic migration of macrophages mediated by the MAPK3/ERK1 and AKT1 pathway. Blocks TNFSF11/RANKL-induced osteoclast formation from macrophages by inhibiting up-regulation of osteoclast fusogenic and differentiation genes. Stimulation of macrophage migration and inhibition of osteoclast formation is mediated via GPCR FPR2. Acts as an adipokine by negatively regulating vascular smooth muscle cell (VSMC) proliferation and migration in response to platelet-derived growth factor stimulation via GPCR S1PR2 and G protein GNA12/GNA13-transmitted RHOA signaling. Inhibits injury-induced cell proliferation and neointima formation in the femoral arteries. This chain is Chemokine-like protein TAFA-5, found in Homo sapiens (Human).